The chain runs to 220 residues: Small ribosomal subunit protein uS3c (220 aa).

Residues 43-120 form the KH type-2 domain; sequence IQHYVEKNTR…RLNIAIIRVA (78 aa).

This sequence belongs to the universal ribosomal protein uS3 family. In terms of assembly, part of the 30S ribosomal subunit.

Its subcellular location is the plastid. It localises to the chloroplast. In Piper cenocladum (Ant piper), this protein is Small ribosomal subunit protein uS3c (rps3).